A 240-amino-acid chain; its full sequence is CRISPR-associated protein Cas5 3 (240 aa).

The protein belongs to the CRISPR-associated protein Cas5 family. Subtype I-A/Apern subfamily. As to quaternary structure, part of the aCascade ribonucleoprotein complex.

CRISPR (clustered regularly interspaced short palindromic repeat) is an adaptive immune system that provides protection against mobile genetic elements (viruses, transposable elements and conjugative plasmids). CRISPR clusters contain spacers, sequences complementary to antecedent mobile elements, and target invading nucleic acids. CRISPR clusters are transcribed and processed into CRISPR RNA (crRNA). This Saccharolobus solfataricus (strain ATCC 35092 / DSM 1617 / JCM 11322 / P2) (Sulfolobus solfataricus) protein is CRISPR-associated protein Cas5 3 (cas5c).